A 275-amino-acid polypeptide reads, in one-letter code: MNYHVMTLFPDMIHQAMNTSIIGRAMEKGLLTINAIDIREFSEDKHRRVDDYPYGGGAGMVMAPGPVYRTYEHVMKMIDHNKEMLAQDKTMKIPEESVSERKNETRRPRVIYLTPQGKVFHQKMAEEFAKEDDLVFLCGHYEGIDERVLDQIVTDYVSIGDYILTGGELPVMVMMDAISRLIPGVLNNNASAEFESLQDNLLEYPQYTRPEVFMEQKVPDVLLSGHHANIEKWRREQSIIRTLKNRPELLEEAVLSKKEKQFLEQLRLGEDSKNV.

S-adenosyl-L-methionine is bound by residues G139 and 159-164 (IGDYIL).

This sequence belongs to the RNA methyltransferase TrmD family. Homodimer.

It localises to the cytoplasm. The catalysed reaction is guanosine(37) in tRNA + S-adenosyl-L-methionine = N(1)-methylguanosine(37) in tRNA + S-adenosyl-L-homocysteine + H(+). Functionally, specifically methylates guanosine-37 in various tRNAs. In Lachnoclostridium phytofermentans (strain ATCC 700394 / DSM 18823 / ISDg) (Clostridium phytofermentans), this protein is tRNA (guanine-N(1)-)-methyltransferase.